Consider the following 433-residue polypeptide: Homogentisate 1,2-dioxygenase (433 aa).

His-288 acts as the Proton acceptor in catalysis. Residues His-331 and Glu-337 each contribute to the Fe cation site. Residues Tyr-346 and His-367 each contribute to the homogentisate site. His-367 contributes to the Fe cation binding site.

It belongs to the homogentisate dioxygenase family. Hexamer; dimer of trimers. Requires Fe cation as cofactor.

It catalyses the reaction homogentisate + O2 = 4-maleylacetoacetate + H(+). The protein operates within amino-acid degradation; L-phenylalanine degradation; acetoacetate and fumarate from L-phenylalanine: step 4/6. In terms of biological role, involved in the catabolism of homogentisate (2,5-dihydroxyphenylacetate or 2,5-OH-PhAc), a central intermediate in the degradation of phenylalanine and tyrosine. Catalyzes the oxidative ring cleavage of the aromatic ring of homogentisate to yield maleylacetoacetate. In Pseudomonas putida (strain ATCC 700007 / DSM 6899 / JCM 31910 / BCRC 17059 / LMG 24140 / F1), this protein is Homogentisate 1,2-dioxygenase.